A 311-amino-acid polypeptide reads, in one-letter code: Deoxyhypusine hydroxylase (311 aa).

5 HEAT-like PBS-type repeats span residues 69-95, 102-128, 196-222, 228-254, and 261-287; these read LKHEVAYVLGQTKNLHAAQYLRSVLEN, VRHEAAEALGALGDKDSLALLEDYFKN, ERYRAMFRLRDMGTDEACLALASGLDD, FKHEIAYVFGQLCNPVTVPALIKTLKD, and VRHEAAEALGSIATDECLPVLQSFLND. The Fe cation site is built by histidine 71, glutamate 72, histidine 104, and glutamate 105. Positions 230, 231, 263, and 264 each coordinate Fe cation.

This sequence belongs to the deoxyhypusine hydroxylase family. Requires Fe(2+) as cofactor.

The protein resides in the cytoplasm. It is found in the nucleus. The catalysed reaction is [eIF5A protein]-deoxyhypusine + AH2 + O2 = [eIF5A protein]-hypusine + A + H2O. It functions in the pathway protein modification; eIF5A hypusination. Its function is as follows. Catalyzes the hydroxylation of the N(6)-(4-aminobutyl)-L-lysine intermediate to form hypusine, an essential post-translational modification only found in mature eIF-5A factor. This chain is Deoxyhypusine hydroxylase, found in Debaryomyces hansenii (strain ATCC 36239 / CBS 767 / BCRC 21394 / JCM 1990 / NBRC 0083 / IGC 2968) (Yeast).